Here is a 718-residue protein sequence, read N- to C-terminus: Ribosomal RNA large subunit methyltransferase K/L (718 aa).

The 112-residue stretch at 44 to 155 (DAYKVCIYSY…KQFVNVFLCL (112 aa)) folds into the THUMP domain.

The protein belongs to the methyltransferase superfamily. RlmKL family.

Its subcellular location is the cytoplasm. The catalysed reaction is guanosine(2445) in 23S rRNA + S-adenosyl-L-methionine = N(2)-methylguanosine(2445) in 23S rRNA + S-adenosyl-L-homocysteine + H(+). It catalyses the reaction guanosine(2069) in 23S rRNA + S-adenosyl-L-methionine = N(2)-methylguanosine(2069) in 23S rRNA + S-adenosyl-L-homocysteine + H(+). Specifically methylates the guanine in position 2445 (m2G2445) and the guanine in position 2069 (m7G2069) of 23S rRNA. The sequence is that of Ribosomal RNA large subunit methyltransferase K/L from Francisella tularensis subsp. novicida (strain U112).